Consider the following 156-residue polypeptide: Small ribosomal subunit protein uS7c (156 aa).

Belongs to the universal ribosomal protein uS7 family. As to quaternary structure, part of the 30S ribosomal subunit.

Its subcellular location is the plastid. The protein localises to the chloroplast. Its function is as follows. One of the primary rRNA binding proteins, it binds directly to 16S rRNA where it nucleates assembly of the head domain of the 30S subunit. The polypeptide is Small ribosomal subunit protein uS7c (rps7) (Euglena gracilis).